Reading from the N-terminus, the 473-residue chain is Photosystem II CP43 reaction center protein (473 aa).

Positions Met-1–Glu-14 are excised as a propeptide. Thr-15 is subject to N-acetylthreonine. Thr-15 is subject to Phosphothreonine. 5 helical membrane-spanning segments follow: residues Leu-69–Ala-93, Leu-134–Asn-155, Lys-178–Thr-200, Lys-255–Ser-275, and Trp-291–Ala-312. Glu-367 serves as a coordination point for [CaMn4O5] cluster. Residues Arg-447–Pro-471 traverse the membrane as a helical segment.

It belongs to the PsbB/PsbC family. PsbC subfamily. In terms of assembly, PSII is composed of 1 copy each of membrane proteins PsbA, PsbB, PsbC, PsbD, PsbE, PsbF, PsbH, PsbI, PsbJ, PsbK, PsbL, PsbM, PsbT, PsbX, PsbY, PsbZ, Psb30/Ycf12, at least 3 peripheral proteins of the oxygen-evolving complex and a large number of cofactors. It forms dimeric complexes. It depends on Binds multiple chlorophylls and provides some of the ligands for the Ca-4Mn-5O cluster of the oxygen-evolving complex. It may also provide a ligand for a Cl- that is required for oxygen evolution. PSII binds additional chlorophylls, carotenoids and specific lipids. as a cofactor.

It localises to the plastid. Its subcellular location is the chloroplast thylakoid membrane. Functionally, one of the components of the core complex of photosystem II (PSII). It binds chlorophyll and helps catalyze the primary light-induced photochemical processes of PSII. PSII is a light-driven water:plastoquinone oxidoreductase, using light energy to abstract electrons from H(2)O, generating O(2) and a proton gradient subsequently used for ATP formation. The sequence is that of Photosystem II CP43 reaction center protein from Carica papaya (Papaya).